A 414-amino-acid polypeptide reads, in one-letter code: Mu-like prophage FluMu F protein (414 aa).

The protein to phage Mu protein F.

In terms of biological role, involved in virion morphogenesis. The polypeptide is Mu-like prophage FluMu F protein (Haemophilus influenzae (strain ATCC 51907 / DSM 11121 / KW20 / Rd)).